Here is a 600-residue protein sequence, read N- to C-terminus: MTTQSIILLAVFLLVLLVLAYPLGTYLAKVGGTAPIRGLGWLARFEQFLYRMAGSNAQTEMSWKGYAIALLVFNVLGTFFVYAVQRMQAWLPLNPQAFGNVSPDSSFNTAVSFVANTNWQGYGGESTMSYLTQMLALSGQNFFSAATGIAVIYALIRGFSHRSVKSIGNFWVDLTRSTLYVLLPLSVIVAVVLMSQGVIQNFSSYKDVALIDPITYQQPKVGTDGQPVVDDKGAPVLETLTAKTQTIAMGPVASQEAIKMLGTNGGGFFNANSAHPYENPTAFSNLVEMLAIFLIPAALCFTFGRMVGDMRQGWAILGAMTLLFVVLTAVVMGAEQQAHPGLAALGVDQGASLMQAGGNMEGKETRFGISASTLFAAVTTAASCGAVNAMHDSFTPLGGMIPTVLMQLGEVVFGGVGTGLYGMLVFAILAVFIAGLMIGRTPEYLGKKIQAYEMKMASLVILVTPCLVLLGTAIAVVLDPGKAGILNPGAHGFSEVLYAFTSAANNNGSAFAGLSANTPFYNVMLAIAMWFGRFAVIVPVLAIAGSLAAKKRLEVNAGTMPTHGPLFIALLVGTVLLVGVLNYVPALALGPVVEHLQLFK.

The next 11 helical transmembrane spans lie at 6–26 (IILL…LGTY), 65–85 (GYAI…YAVQ), 136–156 (ALSG…YALI), 179–199 (LYVL…QGVI), 283–303 (FSNL…CFTF), 314–334 (WAIL…VMGA), 367–387 (FGIS…CGAV), 419–439 (GLYG…LMIG), 458–478 (SLVI…AVVL), 523–543 (VMLA…VLAI), and 566–586 (LFIA…YVPA).

This sequence belongs to the KdpA family. As to quaternary structure, the system is composed of three essential subunits: KdpA, KdpB and KdpC.

It is found in the cell inner membrane. Its function is as follows. Part of the high-affinity ATP-driven potassium transport (or Kdp) system, which catalyzes the hydrolysis of ATP coupled with the electrogenic transport of potassium into the cytoplasm. This subunit binds the periplasmic potassium ions and delivers the ions to the membrane domain of KdpB through an intramembrane tunnel. The protein is Potassium-transporting ATPase potassium-binding subunit of Janthinobacterium sp. (strain Marseille) (Minibacterium massiliensis).